Reading from the N-terminus, the 376-residue chain is PqqA peptide cyclase (376 aa).

The Radical SAM core domain maps to 4-219 (VPPPLSVLLE…VETARRSLGD (216 aa)). [4Fe-4S] cluster contacts are provided by Cys18, Cys22, and Cys25.

The protein belongs to the radical SAM superfamily. PqqE family. Interacts with PqqD. The interaction is necessary for activity of PqqE. It depends on [4Fe-4S] cluster as a cofactor.

The enzyme catalyses [PQQ precursor protein] + S-adenosyl-L-methionine = E-Y cross-linked-[PQQ precursor protein] + 5'-deoxyadenosine + L-methionine + H(+). It functions in the pathway cofactor biosynthesis; pyrroloquinoline quinone biosynthesis. Functionally, catalyzes the cross-linking of a glutamate residue and a tyrosine residue in the PqqA protein as part of the biosynthesis of pyrroloquinoline quinone (PQQ). The chain is PqqA peptide cyclase from Xanthomonas campestris pv. campestris (strain 8004).